An 865-amino-acid polypeptide reads, in one-letter code: Alanine--tRNA ligase (865 aa).

Residues His-568, His-572, Cys-670, and His-674 each contribute to the Zn(2+) site.

The protein belongs to the class-II aminoacyl-tRNA synthetase family. Requires Zn(2+) as cofactor.

It is found in the cytoplasm. The catalysed reaction is tRNA(Ala) + L-alanine + ATP = L-alanyl-tRNA(Ala) + AMP + diphosphate. Its function is as follows. Catalyzes the attachment of alanine to tRNA(Ala) in a two-step reaction: alanine is first activated by ATP to form Ala-AMP and then transferred to the acceptor end of tRNA(Ala). Also edits incorrectly charged Ser-tRNA(Ala) and Gly-tRNA(Ala) via its editing domain. The protein is Alanine--tRNA ligase of Vibrio campbellii (strain ATCC BAA-1116).